Consider the following 896-residue polypeptide: Protein bride of sevenless (896 aa).

The first 31 residues, methionine 1–glutamate 31, serve as a signal peptide directing secretion. The Extracellular portion of the chain corresponds to cysteine 32–tryptophan 530. Residues threonine 38–valine 84 form a disordered region. Over residues proline 52–isoleucine 64 the composition is skewed to polar residues. The span at threonine 65–valine 84 shows a compositional bias: low complexity. 4 N-linked (GlcNAc...) asparagine glycosylation sites follow: asparagine 183, asparagine 307, asparagine 474, and asparagine 485. 7 helical membrane passes run valine 531 to valine 554, isoleucine 570 to isoleucine 588, valine 615 to alanine 637, alanine 655 to methionine 676, tryptophan 693 to isoleucine 712, isoleucine 728 to phenylalanine 748, and leucine 759 to valine 781. The Cytoplasmic portion of the chain corresponds to arginine 782–phenylalanine 896. Disordered regions lie at residues serine 825 to glycine 844 and alanine 861 to phenylalanine 896. The span at glutamine 874 to leucine 884 shows a compositional bias: low complexity.

Belongs to the G-protein coupled receptor 3 family. As to expression, expressed exclusively by R8 photoreceptor cells and is internalized in a sev-dependent manner by R7 cells.

It is found in the cell membrane. Functionally, acts as a ligand for sevenless tyrosine-kinase receptor during eye development. The protein is Protein bride of sevenless (boss) of Drosophila melanogaster (Fruit fly).